Here is a 533-residue protein sequence, read N- to C-terminus: T-complex protein 1 subunit delta (533 aa).

Residues 1–26 (MSAPAAAPAKVLPSRSDFDEKEKEKD) are disordered. The span at 16 to 26 (SDFDEKEKEKD) shows a compositional bias: basic and acidic residues.

The protein belongs to the TCP-1 chaperonin family. As to quaternary structure, heterooligomeric complex of about 850 to 900 kDa that forms two stacked rings, 12 to 16 nm in diameter.

It is found in the cytoplasm. In terms of biological role, molecular chaperone; assists the folding of proteins upon ATP hydrolysis. Known to play a role, in vitro, in the folding of actin and tubulin. The polypeptide is T-complex protein 1 subunit delta (cct4) (Dictyostelium discoideum (Social amoeba)).